A 206-amino-acid chain; its full sequence is Small ribosomal subunit protein uS4 (206 aa).

The 61-residue stretch at 96 to 156 (SRLDNVVYRM…EKSKKQLRIQ (61 aa)) folds into the S4 RNA-binding domain.

This sequence belongs to the universal ribosomal protein uS4 family. In terms of assembly, part of the 30S ribosomal subunit. Contacts protein S5. The interaction surface between S4 and S5 is involved in control of translational fidelity.

Its function is as follows. One of the primary rRNA binding proteins, it binds directly to 16S rRNA where it nucleates assembly of the body of the 30S subunit. Functionally, with S5 and S12 plays an important role in translational accuracy. This chain is Small ribosomal subunit protein uS4, found in Francisella philomiragia subsp. philomiragia (strain ATCC 25017 / CCUG 19701 / FSC 153 / O#319-036).